We begin with the raw amino-acid sequence, 348 residues long: Growth-regulating factor 5 (348 aa).

A QLQ domain is found at 24–59 (VFTAAQWAELEQQALIYKYLVAGVPVPGDLLLPIRP). 2 short sequence motifs (bipartite nuclear localization signal) span residues 94-112 (KKLD…KKWR) and 130-137 (RGRNRSRK). The region spanning 97 to 141 (DPEPWRCRRTDGKKWRCSKEAHPDSKYCERHMHRGRNRSRKPVES) is the WRC domain. Disordered stretches follow at residues 125–165 (ERHM…HDTD) and 306–348 (LRPF…PRCD). A compositionally biased stretch (basic residues) spans 127–136 (HMHRGRNRSR). A compositionally biased stretch (polar residues) spans 148-161 (PQSQPQLSNVTTAT). Positions 306-320 (LRPFFDEWPGRRDSW) are enriched in basic and acidic residues. Residues 329-340 (NQTSFSTTQLSI) show a composition bias toward polar residues.

This sequence belongs to the GRF family.

The protein localises to the nucleus. Transcription activator that plays a regulatory role in gibberellin-induced stem elongation. The sequence is that of Growth-regulating factor 5 (GRF5) from Oryza sativa subsp. japonica (Rice).